The primary structure comprises 344 residues: Glycerol-3-phosphate dehydrogenase [NAD(P)+] (344 aa).

Ser-18, Tyr-19, His-39, and Lys-113 together coordinate NADPH. Sn-glycerol 3-phosphate is bound by residues Lys-113, Gly-142, and Thr-144. NADPH is bound at residue Ala-146. 5 residues coordinate sn-glycerol 3-phosphate: Lys-198, Asp-251, Ser-261, Arg-262, and Asn-263. The Proton acceptor role is filled by Lys-198. NADPH is bound at residue Arg-262. Positions 286 and 288 each coordinate NADPH.

This sequence belongs to the NAD-dependent glycerol-3-phosphate dehydrogenase family.

The protein resides in the cytoplasm. The enzyme catalyses sn-glycerol 3-phosphate + NAD(+) = dihydroxyacetone phosphate + NADH + H(+). It carries out the reaction sn-glycerol 3-phosphate + NADP(+) = dihydroxyacetone phosphate + NADPH + H(+). It participates in membrane lipid metabolism; glycerophospholipid metabolism. In terms of biological role, catalyzes the reduction of the glycolytic intermediate dihydroxyacetone phosphate (DHAP) to sn-glycerol 3-phosphate (G3P), the key precursor for phospholipid synthesis. This is Glycerol-3-phosphate dehydrogenase [NAD(P)+] from Blochmanniella pennsylvanica (strain BPEN).